A 440-amino-acid polypeptide reads, in one-letter code: Thymidine phosphorylase (440 aa).

It belongs to the thymidine/pyrimidine-nucleoside phosphorylase family. Homodimer.

It catalyses the reaction thymidine + phosphate = 2-deoxy-alpha-D-ribose 1-phosphate + thymine. The protein operates within pyrimidine metabolism; dTMP biosynthesis via salvage pathway; dTMP from thymine: step 1/2. The enzymes which catalyze the reversible phosphorolysis of pyrimidine nucleosides are involved in the degradation of these compounds and in their utilization as carbon and energy sources, or in the rescue of pyrimidine bases for nucleotide synthesis. The protein is Thymidine phosphorylase of Salmonella dublin (strain CT_02021853).